The primary structure comprises 82 residues: CLAVATA3/ESR (CLE)-related protein 53 (82 aa).

A signal peptide spans 1–26; sequence MATSTNSREFLIFICVLTLLVVRSEA. P74 and P77 each carry hydroxyproline. P77 carries an O-linked (Ara...) hydroxyproline glycan.

The protein belongs to the CLV3/ESR signal peptide family. In terms of processing, the O-glycosylation (arabinosylation) of the hydroxyproline Pro-77 enhances binding affinity of the CLE53p peptide for its receptor. As to expression, expressed in root vasculature.

The protein localises to the secreted. The protein resides in the extracellular space. Its function is as follows. Signaling peptide involved in the regulation of root colonization by arbuscular mycorrhizal (AM) fungi. Moves from root to shoot to function with the receptor kinase SUNN, in a signaling pathway that repress strigolactone biosynthetic genes and strigolactone content in the roots, and consequently reduces the promotion of further colonization by AM fungi. The polypeptide is CLAVATA3/ESR (CLE)-related protein 53 (Medicago truncatula (Barrel medic)).